The chain runs to 200 residues: Guanylate kinase (200 aa).

Positions 4–183 constitute a Guanylate kinase-like domain; that stretch reads GAVLIISGPS…AKEAMVAIAR (180 aa). 11–18 provides a ligand contact to ATP; sequence GPSGCGKS.

Belongs to the guanylate kinase family.

It localises to the cytoplasm. It carries out the reaction GMP + ATP = GDP + ADP. Functionally, essential for recycling GMP and indirectly, cGMP. In Helicobacter hepaticus (strain ATCC 51449 / 3B1), this protein is Guanylate kinase.